Here is an 856-residue protein sequence, read N- to C-terminus: Rod cGMP-specific 3',5'-cyclic phosphodiesterase subunit beta (856 aa).

Serine 2 bears the N-acetylserine mark. 2 GAF domains span residues 71–220 (NMER…TLNL) and 252–429 (DIER…GWSV). The region spanning 481–814 (EEDELGKILK…KEWKALADEY (334 aa)) is the PDEase domain. The active-site Proton donor is histidine 557. Histidine 561, histidine 597, aspartate 598, and aspartate 718 together coordinate a divalent metal cation. The S-geranylgeranyl cysteine moiety is linked to residue cysteine 853. Positions 854–856 (CIL) are cleaved as a propeptide — removed in mature form.

It belongs to the cyclic nucleotide phosphodiesterase family. Oligomer composed of two catalytic chains (alpha and beta), an inhibitory chain (gamma) and the delta chain. The cofactor is a divalent metal cation.

The protein localises to the membrane. Its subcellular location is the cell projection. The protein resides in the cilium. It localises to the photoreceptor outer segment. It carries out the reaction 3',5'-cyclic GMP + H2O = GMP + H(+). Its function is as follows. Rod-specific cGMP phosphodiesterase that catalyzes the hydrolysis of 3',5'-cyclic GMP. Necessary for the formation of a functional phosphodiesterase holoenzyme. Involved in retinal circadian rhythm photoentrainment via modulation of UVA and orange light-induced phase-shift of the retina clock. May participate in processes of transmission and amplification of the visual signal. In Mus musculus (Mouse), this protein is Rod cGMP-specific 3',5'-cyclic phosphodiesterase subunit beta.